The sequence spans 378 residues: Ferredoxin--NADP reductase, embryo isozyme, chloroplastic (378 aa).

The N-terminal 62 residues, 1 to 62, are a transit peptide targeting the chloroplast; that stretch reads MASALGAQAS…SRHMNKIFSM (62 aa). The region spanning 93-221 is the FAD-binding FR-type domain; sequence KEPYTATIVS…TGPSGKIMLL (129 aa). FAD-binding positions include 153–156, 174–176, tyrosine 180, 195–197, and threonine 237; these read RLYS, CVR, and ICS. Residues serine 156 and arginine 176 each contribute to the NADP(+) site. NADP(+) is bound by residues threonine 237, 269–270, 299–300, lysine 309, 337–338, and glutamate 376; these read VA, SR, and GL.

Belongs to the ferredoxin--NADP reductase type 1 family. FAD is required as a cofactor.

Its subcellular location is the plastid. It localises to the chloroplast. It catalyses the reaction 2 reduced [2Fe-2S]-[ferredoxin] + NADP(+) + H(+) = 2 oxidized [2Fe-2S]-[ferredoxin] + NADPH. It functions in the pathway energy metabolism; photosynthesis. In terms of biological role, may play a key role in regulating the relative amounts of cyclic and non-cyclic electron flow to meet the demands of the plant for ATP and reducing power. Is involved in nitrate assimilation. This chain is Ferredoxin--NADP reductase, embryo isozyme, chloroplastic, found in Oryza sativa subsp. japonica (Rice).